We begin with the raw amino-acid sequence, 201 residues long: FMN-dependent NADH:quinone oxidoreductase (201 aa).

92–95 (MWNL) is a binding site for FMN.

Belongs to the azoreductase type 1 family. Homodimer. The cofactor is FMN.

It catalyses the reaction 2 a quinone + NADH + H(+) = 2 a 1,4-benzosemiquinone + NAD(+). It carries out the reaction N,N-dimethyl-1,4-phenylenediamine + anthranilate + 2 NAD(+) = 2-(4-dimethylaminophenyl)diazenylbenzoate + 2 NADH + 2 H(+). Its function is as follows. Quinone reductase that provides resistance to thiol-specific stress caused by electrophilic quinones. In terms of biological role, also exhibits azoreductase activity. Catalyzes the reductive cleavage of the azo bond in aromatic azo compounds to the corresponding amines. The protein is FMN-dependent NADH:quinone oxidoreductase of Caldicellulosiruptor saccharolyticus (strain ATCC 43494 / DSM 8903 / Tp8T 6331).